A 360-amino-acid chain; its full sequence is Peptide chain release factor 1 (360 aa).

Residue glutamine 235 is modified to N5-methylglutamine. The interval 285–313 (KRQQAEASTRRNLLGSGDRSDRNRTYNFP) is disordered.

The protein belongs to the prokaryotic/mitochondrial release factor family. Methylated by PrmC. Methylation increases the termination efficiency of RF1.

The protein resides in the cytoplasm. Functionally, peptide chain release factor 1 directs the termination of translation in response to the peptide chain termination codons UAG and UAA. This Klebsiella pneumoniae (strain 342) protein is Peptide chain release factor 1.